Here is a 349-residue protein sequence, read N- to C-terminus: tRNA-specific 2-thiouridylase MnmA (349 aa).

Residues 6-13 and M32 contribute to the ATP site; that span reads LLSGGVDS. C103 functions as the Nucleophile in the catalytic mechanism. An intrachain disulfide couples C103 to C195. G127 lines the ATP pocket. The tract at residues 145–147 is interaction with tRNA; sequence KDQ. Catalysis depends on C195, which acts as the Cysteine persulfide intermediate.

The protein belongs to the MnmA/TRMU family.

The protein localises to the cytoplasm. It catalyses the reaction S-sulfanyl-L-cysteinyl-[protein] + uridine(34) in tRNA + AH2 + ATP = 2-thiouridine(34) in tRNA + L-cysteinyl-[protein] + A + AMP + diphosphate + H(+). In terms of biological role, catalyzes the 2-thiolation of uridine at the wobble position (U34) of tRNA, leading to the formation of s(2)U34. In Pseudothermotoga lettingae (strain ATCC BAA-301 / DSM 14385 / NBRC 107922 / TMO) (Thermotoga lettingae), this protein is tRNA-specific 2-thiouridylase MnmA.